The chain runs to 460 residues: Argininosuccinate lyase (460 aa).

The protein belongs to the lyase 1 family. Argininosuccinate lyase subfamily.

Its subcellular location is the cytoplasm. The enzyme catalyses 2-(N(omega)-L-arginino)succinate = fumarate + L-arginine. It participates in amino-acid biosynthesis; L-arginine biosynthesis; L-arginine from L-ornithine and carbamoyl phosphate: step 3/3. In Campylobacter jejuni subsp. doylei (strain ATCC BAA-1458 / RM4099 / 269.97), this protein is Argininosuccinate lyase.